The following is a 294-amino-acid chain: P32 adhesin (294 aa).

2 consecutive transmembrane segments (helical) span residues 11–31 (LVGVSFVFSGVIALGTGVGLT) and 66–86 (VVGAGAGLIVVSLLLGLGIGI). 2 consecutive repeat copies span residues 172–193 (GGPMQPNQMGMRPGFNQMPPQM) and 194–214 (GGMPPNQMGMRPGFNQMPPQM). Residues 172-214 (GGPMQPNQMGMRPGFNQMPPQMGGMPPNQMGMRPGFNQMPPQM) form a 2 X 22 AA repeats region. Positions 234–294 (RPGFRPQPGG…AGFPPQNGPR (61 aa)) are disordered. The span at 241 to 256 (PGGGVPMGNKAGGGFN) shows a compositional bias: gly residues.

It localises to the cell projection. The protein localises to the attachment organelle membrane. Adhesin necessary for successful cytadherence and virulence. In Mycoplasmoides gallisepticum (strain R(low / passage 15 / clone 2)) (Mycoplasma gallisepticum), this protein is P32 adhesin (mgc2).